Consider the following 376-residue polypeptide: Eugenol O-methyltransferase (376 aa).

The S-adenosyl-L-methionine site is built by Gly-219, Asp-242, Met-263, and Lys-276. Residue His-280 is the Proton acceptor of the active site.

The protein belongs to the class I-like SAM-binding methyltransferase superfamily. Cation-independent O-methyltransferase family. COMT subfamily. Homodimer. Expressed predominantly in root hairs.

It carries out the reaction (E)-isoeugenol + S-adenosyl-L-methionine = (E)-isomethyleugenol + S-adenosyl-L-homocysteine + H(+). O-methyltransferase. Substrate preference is eugenol &gt;&gt; orcinol monomethyl ether &gt; resorcinol monomethyl ether. The protein is Eugenol O-methyltransferase (EOMT) of Sorghum bicolor (Sorghum).